Here is a 266-residue protein sequence, read N- to C-terminus: Undecaprenyl-diphosphatase (266 aa).

7 helical membrane-spanning segments follow: residues 39–59, 86–106, 112–132, 153–173, 189–209, 216–236, and 246–266; these read PGSS…VWYF, SIFI…LFVP, VLRS…FMYL, LIGF…GITI, FSFL…FIFS, IGFL…LLAI, and NGLK…LLNL.

Belongs to the UppP family.

Its subcellular location is the cell inner membrane. It carries out the reaction di-trans,octa-cis-undecaprenyl diphosphate + H2O = di-trans,octa-cis-undecaprenyl phosphate + phosphate + H(+). Catalyzes the dephosphorylation of undecaprenyl diphosphate (UPP). Confers resistance to bacitracin. The protein is Undecaprenyl-diphosphatase of Prochlorococcus marinus (strain MIT 9215).